A 161-amino-acid polypeptide reads, in one-letter code: 3-hydroxyacyl-[acyl-carrier-protein] dehydratase FabZ (161 aa).

His66 is an active-site residue.

It belongs to the thioester dehydratase family. FabZ subfamily.

It localises to the cytoplasm. It catalyses the reaction a (3R)-hydroxyacyl-[ACP] = a (2E)-enoyl-[ACP] + H2O. Functionally, involved in unsaturated fatty acids biosynthesis. Catalyzes the dehydration of short chain beta-hydroxyacyl-ACPs and long chain saturated and unsaturated beta-hydroxyacyl-ACPs. This chain is 3-hydroxyacyl-[acyl-carrier-protein] dehydratase FabZ, found in Gluconacetobacter diazotrophicus (strain ATCC 49037 / DSM 5601 / CCUG 37298 / CIP 103539 / LMG 7603 / PAl5).